A 405-amino-acid polypeptide reads, in one-letter code: Phosphopentomutase (405 aa).

Mn(2+) is bound by residues Asp-10, Asp-303, His-308, Asp-344, His-345, and His-356.

The protein belongs to the phosphopentomutase family. Requires Mn(2+) as cofactor.

The protein localises to the cytoplasm. The enzyme catalyses 2-deoxy-alpha-D-ribose 1-phosphate = 2-deoxy-D-ribose 5-phosphate. The catalysed reaction is alpha-D-ribose 1-phosphate = D-ribose 5-phosphate. The protein operates within carbohydrate degradation; 2-deoxy-D-ribose 1-phosphate degradation; D-glyceraldehyde 3-phosphate and acetaldehyde from 2-deoxy-alpha-D-ribose 1-phosphate: step 1/2. Functionally, isomerase that catalyzes the conversion of deoxy-ribose 1-phosphate (dRib-1-P) and ribose 1-phosphate (Rib-1-P) to deoxy-ribose 5-phosphate (dRib-5-P) and ribose 5-phosphate (Rib-5-P), respectively. This chain is Phosphopentomutase, found in Shewanella denitrificans (strain OS217 / ATCC BAA-1090 / DSM 15013).